Consider the following 57-residue polypeptide: UPF0391 membrane protein XOO1885 (57 aa).

A run of 2 helical transmembrane segments spans residues 4-24 (WAII…GGMA) and 33-53 (FLFW…MTIA).

This sequence belongs to the UPF0391 family.

It localises to the cell membrane. This Xanthomonas oryzae pv. oryzae (strain KACC10331 / KXO85) protein is UPF0391 membrane protein XOO1885.